Consider the following 244-residue polypeptide: 7-cyano-7-deazaguanine synthase (244 aa).

14–24 contributes to the ATP binding site; it reads FSGGQDSATCV. Zn(2+)-binding residues include C202, C217, C220, and C223.

This sequence belongs to the QueC family. Zn(2+) serves as cofactor.

It catalyses the reaction 7-carboxy-7-deazaguanine + NH4(+) + ATP = 7-cyano-7-deazaguanine + ADP + phosphate + H2O + H(+). Its pathway is purine metabolism; 7-cyano-7-deazaguanine biosynthesis. Its function is as follows. Catalyzes the ATP-dependent conversion of 7-carboxy-7-deazaguanine (CDG) to 7-cyano-7-deazaguanine (preQ(0)). The chain is 7-cyano-7-deazaguanine synthase from Burkholderia lata (strain ATCC 17760 / DSM 23089 / LMG 22485 / NCIMB 9086 / R18194 / 383).